Consider the following 243-residue polypeptide: MEMERINEDTIRVVIGNDDLNERGIRVLDLLGNHKQIESFFYSILEEVDVDHQFQDNDAVTFQVLPNRNGLELFISKNSDNLQDTIAKATQSPDQSDDSDSQDDVSDYLKRKLMQTDTNQVEDGQGIAHNPTKDTNDLDPYLDDPDTPTKEYVLKFDQFEDLVSLAQLFRPEGLASNLFKYRDQYYLELVFFVDQSSTATIKDDVAVALEYAHLANISADVLLEHGEKIMSNAALETIRHYFK.

The interval 119–140 (NQVEDGQGIAHNPTKDTNDLDP) is disordered.

It belongs to the MecA family. As to quaternary structure, homodimer.

In terms of biological role, enables the recognition and targeting of unfolded and aggregated proteins to the ClpC protease or to other proteins involved in proteolysis. This Lactiplantibacillus plantarum (strain ATCC BAA-793 / NCIMB 8826 / WCFS1) (Lactobacillus plantarum) protein is Adapter protein MecA.